We begin with the raw amino-acid sequence, 257 residues long: 5-oxoprolinase subunit A (257 aa).

This sequence belongs to the LamB/PxpA family. In terms of assembly, forms a complex composed of PxpA, PxpB and PxpC.

It carries out the reaction 5-oxo-L-proline + ATP + 2 H2O = L-glutamate + ADP + phosphate + H(+). Functionally, catalyzes the cleavage of 5-oxoproline to form L-glutamate coupled to the hydrolysis of ATP to ADP and inorganic phosphate. This chain is 5-oxoprolinase subunit A, found in Bacillus subtilis (strain 168).